Reading from the N-terminus, the 23-residue chain is Dahlein-4.2 (23 aa).

Expressed by the skin dorsal glands.

It is found in the secreted. In terms of biological role, has no antimicrobial activity. The polypeptide is Dahlein-4.2 (Ranoidea dahlii (Dahl's aquatic frog)).